The following is a 197-amino-acid chain: Large ribosomal subunit protein uL11 (197 aa).

Belongs to the universal ribosomal protein uL11 family. As to quaternary structure, part of the ribosomal stalk of the 50S ribosomal subunit. Interacts with L10 and the large rRNA to form the base of the stalk. L10 forms an elongated spine to which L12 dimers bind in a sequential fashion forming a multimeric L10(L12)X complex. One or more lysine residues are methylated.

In terms of biological role, forms part of the ribosomal stalk which helps the ribosome interact with GTP-bound translation factors. The protein is Large ribosomal subunit protein uL11 of Mycoplasma mobile (strain ATCC 43663 / 163K / NCTC 11711) (Mesomycoplasma mobile).